Reading from the N-terminus, the 185-residue chain is ATP synthase subunit b (185 aa).

A helical transmembrane segment spans residues 28-48; that stretch reads VVLVGFAVLMYIVVKFVVPMF.

This sequence belongs to the ATPase B chain family. F-type ATPases have 2 components, F(1) - the catalytic core - and F(0) - the membrane proton channel. F(1) has five subunits: alpha(3), beta(3), gamma(1), delta(1), epsilon(1). F(0) has three main subunits: a(1), b(2) and c(10-14). The alpha and beta chains form an alternating ring which encloses part of the gamma chain. F(1) is attached to F(0) by a central stalk formed by the gamma and epsilon chains, while a peripheral stalk is formed by the delta and b chains.

The protein resides in the cell membrane. F(1)F(0) ATP synthase produces ATP from ADP in the presence of a proton or sodium gradient. F-type ATPases consist of two structural domains, F(1) containing the extramembraneous catalytic core and F(0) containing the membrane proton channel, linked together by a central stalk and a peripheral stalk. During catalysis, ATP synthesis in the catalytic domain of F(1) is coupled via a rotary mechanism of the central stalk subunits to proton translocation. Functionally, component of the F(0) channel, it forms part of the peripheral stalk, linking F(1) to F(0). The protein is ATP synthase subunit b of Paenarthrobacter aurescens (strain TC1).